A 497-amino-acid polypeptide reads, in one-letter code: MGATDQALEAESKTTEPPKTPPVPEQHDRPFLGRQANLCHLLVLLFSGGLAAITLHIFTSSNVGWRLRQLHHLPTAHYLQTRDEFAVYSVDELNAFKEFYDRSISDSVGSSYSEAEETNIKEALGALRLAQDMYLAGKDDKAARLFQHSLALAPRHPTVLLRYGEFLEHSQRNIVLADQYYFQALSISPSNSEALANRQRTADVVQSLDERRLESLDSKRDALSAIHESSAALRRAKKEAYFQHIYHTVGIEGNTMTLAQTRSILETRMAVDGKSIDEHNEILGMDLAMKYINASLVQKMEITIKDILELHRRVLGHVDPIEGGEFRRNQVYVGGHVPPGPGDLALLMQRFERWLNSEHSSSMHPVNYAALAHYKLVHIHPFIDGNGRTSRLLMNTLLMRAGYPPVIIPKQQRSKYYHFLKLANEGDIRPFVRFIADCTEKTLDLYLWATSDLPHQIPMLIQSTSEAGEGVPQLQSSQMGGGASIPEFHESGSGSLP.

The tract at residues Met-1–Pro-30 is disordered. The helical transmembrane segment at Leu-38 to Phe-58 threads the bilayer. TPR repeat units lie at residues Ala-123–His-156 and Pro-157–Asn-191. The Inhibitory (S/T)XXXE(G/N) motif signature appears at Thr-248–Gly-253. ATP contacts are provided by residues Glu-252 and Val-333 to His-336. Positions Ile-302–Asp-437 constitute a Fido domain. Residue His-380 is part of the active site. Residues Asp-384–Arg-391, Tyr-416–Tyr-417, and Asn-424 each bind ATP. The segment at Gly-468 to Pro-497 is disordered.

The protein belongs to the fic family. As to quaternary structure, homodimer.

It is found in the membrane. It catalyses the reaction L-tyrosyl-[protein] + ATP = O-(5'-adenylyl)-L-tyrosyl-[protein] + diphosphate. The catalysed reaction is L-threonyl-[protein] + ATP = 3-O-(5'-adenylyl)-L-threonyl-[protein] + diphosphate. The enzyme catalyses 3-O-(5'-adenylyl)-L-threonyl-[protein] + H2O = L-threonyl-[protein] + AMP + H(+). The side chain of Glu-252 determines which of the two opposing activities (AMPylase or de-AMPylase) will take place. In response to endoplasmic reticulum stress, mediates de-AMPylase activity. Adenylyltransferase activity is inhibited by the inhibitory helix present at the N-terminus: Glu-252 binds ATP and competes with ATP-binding at Arg-391, thereby preventing adenylyltransferase activity. In unstressed cells, disengagement of Glu-252 promotes adenylyltransferase activity. Activation dissociates ATP-binding from Glu-252, allowing ordered binding of the entire ATP moiety with the alpha-phosphate in an orientation that is productive for accepting an incoming target hydroxyl side chain. Its function is as follows. Protein that can both mediate the addition of adenosine 5'-monophosphate (AMP) to specific residues of target proteins (AMPylation), and the removal of the same modification from target proteins (de-AMPylation), depending on the context. The side chain of Glu-252 determines which of the two opposing activities (AMPylase or de-AMPylase) will take place. Acts as a key regulator of the unfolded protein response (UPR) by mediating AMPylation or de-AMPylation of Hsc70-3/BiP. In unstressed cells, acts as an adenylyltransferase by mediating AMPylation of Hsc70-3/BiP at 'Thr-518', thereby inactivating it. In response to endoplasmic reticulum stress, acts as a phosphodiesterase by mediating removal of ATP (de-AMPylation) from Hsc70-3/BiP at 'Thr-518', leading to restore HSPA5/BiP activity. The chain is Protein adenylyltransferase Fic from Drosophila ananassae (Fruit fly).